The sequence spans 246 residues: Adenylate kinase 4 (246 aa).

The residue at position 2 (alanine 2) is an N-acetylalanine. 43–48 contributes to the ATP binding site; sequence GSGKGT. The interval 63 to 92 is NMP; it reads STGDMLRAAVASKTPLGVKAKEAMEKGELV. AMP is bound by residues threonine 64, arginine 69, 90–92, 118–121, and glutamine 125; these read ELV and GFPR. The tract at residues 159 to 196 is LID; that stretch reads GRWIHPSSGRSYHTKFAPPKTPGVDDITGEPLIQRKDD. ATP is bound at residue arginine 160. 2 residues coordinate AMP: arginine 193 and arginine 204.

The protein belongs to the adenylate kinase family. In terms of assembly, monomer.

It localises to the cytoplasm. The catalysed reaction is AMP + ATP = 2 ADP. In terms of biological role, catalyzes the reversible transfer of the terminal phosphate group between ATP and AMP. Plays an important role in cellular energy homeostasis and in adenine nucleotide metabolism. The chain is Adenylate kinase 4 (ADK1) from Arabidopsis thaliana (Mouse-ear cress).